The chain runs to 146 residues: Hemoglobin subunit beta (146 aa).

Position 1 is an N-acetylvaline (V1). The Globin domain maps to 2–146 (HLTAEEKAAV…VANALAHKYH (145 aa)). The residue at position 12 (T12) is a Phosphothreonine. Phosphoserine is present on S44. K59 bears the N6-acetyllysine mark. Heme b is bound at residue H63. K82 is modified (N6-acetyllysine). Heme b is bound at residue H92. C93 carries the S-nitrosocysteine modification. K144 carries the N6-acetyllysine modification.

It belongs to the globin family. As to quaternary structure, heterotetramer of two alpha chains and two beta chains. In terms of tissue distribution, red blood cells.

Its function is as follows. Involved in oxygen transport from the lung to the various peripheral tissues. This chain is Hemoglobin subunit beta (HBB), found in Mellivora capensis (Ratel).